Here is a 249-residue protein sequence, read N- to C-terminus: Ribonuclease HII (249 aa).

A compositionally biased stretch (pro residues) spans 1 to 19 (MAPRPKAPPQPAEPDPALP). Positions 1-31 (MAPRPKAPPQPAEPDPALPRPRGRPPKAGAV) are disordered. In terms of domain architecture, RNase H type-2 spans 52-240 (APVAGADEVG…VREQQLGLFP (189 aa)). A divalent metal cation is bound by residues Asp58, Glu59, and Asp149.

The protein belongs to the RNase HII family. Mn(2+) is required as a cofactor. Mg(2+) serves as cofactor.

It localises to the cytoplasm. The catalysed reaction is Endonucleolytic cleavage to 5'-phosphomonoester.. Its function is as follows. Endonuclease that specifically degrades the RNA of RNA-DNA hybrids. The chain is Ribonuclease HII from Xanthobacter autotrophicus (strain ATCC BAA-1158 / Py2).